Consider the following 1074-residue polypeptide: Phospholipase D1 (1074 aa).

In terms of domain architecture, PX spans 81–212; that stretch reads IKAQVLEVER…TEFLDVSQLS (132 aa). In terms of domain architecture, PH spans 219–328; it reads PKGLEGMIMK…WGGAIEEFIR (110 aa). 2 S-palmitoyl cysteine lipidation sites follow: C240 and C241. The PLD phosphodiesterase 1 domain occupies 459–486; sequence YLWAHHEKLVIIDQSVAFVGGIDLAYGR. Residues 463 to 928 form a catalytic region; that stretch reads HHEKLVIIDQ…MLGKRDSEMA (466 aa). A phosphoserine mark is found at S499, S561, and S629. Positions 891-918 constitute a PLD phosphodiesterase 2 domain; sequence ELIYVHSKLLIADDNTVIIGSANINDRS.

It belongs to the phospholipase D family. As to quaternary structure, interacts with PIP5K1B. Expressed in kidney, lung, and at a much lower levels, in brain, liver, heart, testis and spleen.

It localises to the cytoplasm. It is found in the perinuclear region. The protein resides in the endoplasmic reticulum membrane. The protein localises to the golgi apparatus membrane. Its subcellular location is the late endosome membrane. The enzyme catalyses a 1,2-diacyl-sn-glycero-3-phosphocholine + H2O = a 1,2-diacyl-sn-glycero-3-phosphate + choline + H(+). It catalyses the reaction ethanol + a 1,2-diacyl-sn-glycero-3-phosphocholine = 1,2-diacyl-sn-glycero-3-phosphoethanol + choline. It carries out the reaction 1,2-dihexadecanoyl-sn-glycero-3-phosphocholine + H2O = 1,2-dihexadecanoyl-sn-glycero-3-phosphate + choline + H(+). Stimulated by phosphatidylinositol 4,5-bisphosphate and phosphatidylinositol 3,4,5-trisphosphate, activated by the phosphokinase C-alpha, by the ADP-ribosylation factor-1 (ARF-1), and to a lesser extent by GTP-binding proteins: RHO A, RAC-1 and CDC42. Inhibited by oleate. In terms of biological role, function as phospholipase selectivefor phosphatidylcholine. Implicated as a critical step in numerous cellular pathways, including signal transduction, membrane trafficking, and the regulation of mitosis. May be involved in the regulation of perinuclear intravesicular membrane traffic. The chain is Phospholipase D1 from Mus musculus (Mouse).